The chain runs to 357 residues: LINE-1 retrotransposable element ORF1 protein (357 aa).

The disordered stretch occupies residues 1–40 (MAKGKRKNPTNRNQDHSPSSERSTPTPPSPGHPNTTENLD). The stretch at 59–156 (HKSLKDLQES…IENIDTTVKE (98 aa)) forms a coiled coil. Residues 179-274 (NLRIIGIDEN…KGRPIRITPD (96 aa)) form an RNA recognition motif (RRM) domain region. Residues 278-339 (ETMKARRAWT…STNPALQRII (62 aa)) are C-terminal domain (CTD).

The protein belongs to the transposase 22 family. Homotrimer (via coiled coil domain). May also form larger homooligomers. Interacts with Tex19.1 and UBR2. Interacts with MOV10. Post-translationally, polyubiquitinated, probably by UBR2, which induces its degradation. In terms of tissue distribution, expressed in meiotic spermatocytes and in the cerebellum (at protein level).

It localises to the nucleus. It is found in the nucleolus. The protein localises to the cytoplasm. The protein resides in the cytoplasmic ribonucleoprotein granule. Its subcellular location is the stress granule. Functionally, nucleic acid-binding protein which is essential for retrotransposition of LINE-1 elements in the genome. Functions as a nucleic acid chaperone binding its own transcript and therefore preferentially mobilizing the transcript from which they are encoded. The polypeptide is LINE-1 retrotransposable element ORF1 protein (Mus musculus (Mouse)).